Reading from the N-terminus, the 798-residue chain is Phenylalanine--tRNA ligase beta subunit (798 aa).

Residues 39 to 148 (GKDLDNVVIG…EDAPIGTEYR (110 aa)) enclose the tRNA-binding domain. The B5 domain maps to 401–477 (PQRAEISLNL…RMYGFDNIEA (77 aa)). Mg(2+)-binding residues include D455, D461, E464, and E465. In terms of domain architecture, FDX-ACB spans 705-797 (SKYPEVLRDL…IKDKYNGEIR (93 aa)).

Belongs to the phenylalanyl-tRNA synthetase beta subunit family. Type 1 subfamily. In terms of assembly, tetramer of two alpha and two beta subunits. Mg(2+) is required as a cofactor.

The protein localises to the cytoplasm. The catalysed reaction is tRNA(Phe) + L-phenylalanine + ATP = L-phenylalanyl-tRNA(Phe) + AMP + diphosphate + H(+). In Fusobacterium nucleatum subsp. nucleatum (strain ATCC 25586 / DSM 15643 / BCRC 10681 / CIP 101130 / JCM 8532 / KCTC 2640 / LMG 13131 / VPI 4355), this protein is Phenylalanine--tRNA ligase beta subunit.